Reading from the N-terminus, the 489-residue chain is Phenylalanine--tRNA ligase alpha subunit (489 aa).

L-phenylalanine is bound by residues Thr-316, 355-357 (QLD), Phe-395, and Phe-420.

This sequence belongs to the class-II aminoacyl-tRNA synthetase family. Phe-tRNA synthetase alpha subunit type 2 subfamily. As to quaternary structure, tetramer of two alpha and two beta subunits. Mg(2+) serves as cofactor.

The protein resides in the cytoplasm. The enzyme catalyses tRNA(Phe) + L-phenylalanine + ATP = L-phenylalanyl-tRNA(Phe) + AMP + diphosphate + H(+). In Pyrobaculum aerophilum (strain ATCC 51768 / DSM 7523 / JCM 9630 / CIP 104966 / NBRC 100827 / IM2), this protein is Phenylalanine--tRNA ligase alpha subunit.